We begin with the raw amino-acid sequence, 125 residues long: Large ribosomal subunit protein bL12 (125 aa).

This sequence belongs to the bacterial ribosomal protein bL12 family. As to quaternary structure, homodimer. Part of the ribosomal stalk of the 50S ribosomal subunit. Forms a multimeric L10(L12)X complex, where L10 forms an elongated spine to which 2 to 4 L12 dimers bind in a sequential fashion. Binds GTP-bound translation factors.

Its function is as follows. Forms part of the ribosomal stalk which helps the ribosome interact with GTP-bound translation factors. Is thus essential for accurate translation. This is Large ribosomal subunit protein bL12 from Rhizobium johnstonii (strain DSM 114642 / LMG 32736 / 3841) (Rhizobium leguminosarum bv. viciae).